A 308-amino-acid chain; its full sequence is Ornithine carbamoyltransferase (308 aa).

Residues 50–53, Gln-77, Arg-101, and 128–131 contribute to the carbamoyl phosphate site; these read STRT and HPCQ. L-ornithine contacts are provided by residues Asn-160, Asp-224, and 228 to 229; that span reads SM. Carbamoyl phosphate contacts are provided by residues 264-265 and Arg-292; that span reads CL.

The protein belongs to the aspartate/ornithine carbamoyltransferase superfamily. OTCase family.

The protein localises to the cytoplasm. The catalysed reaction is carbamoyl phosphate + L-ornithine = L-citrulline + phosphate + H(+). It functions in the pathway amino-acid biosynthesis; L-arginine biosynthesis; L-arginine from L-ornithine and carbamoyl phosphate: step 1/3. Reversibly catalyzes the transfer of the carbamoyl group from carbamoyl phosphate (CP) to the N(epsilon) atom of ornithine (ORN) to produce L-citrulline. This chain is Ornithine carbamoyltransferase, found in Mycobacterium ulcerans (strain Agy99).